Consider the following 117-residue polypeptide: Small ribosomal subunit protein bS6 (117 aa).

Residues 92-117 are disordered; that stretch reads KVDEHPEGPSIQMQKREERDNRRERR. Residues 105–117 show a composition bias toward basic and acidic residues; it reads QKREERDNRRERR.

The protein belongs to the bacterial ribosomal protein bS6 family.

Its function is as follows. Binds together with bS18 to 16S ribosomal RNA. The sequence is that of Small ribosomal subunit protein bS6 from Dinoroseobacter shibae (strain DSM 16493 / NCIMB 14021 / DFL 12).